A 214-amino-acid chain; its full sequence is Adenylate kinase (214 aa).

10-15 is a binding site for ATP; sequence GAGKGT. Positions 30 to 59 are NMP; sequence STGDMLRSAVKAGTELGLKAKALMDHGKLV. AMP contacts are provided by residues threonine 31, arginine 36, 57–59, 85–88, and glutamine 92; these read KLV and GFPR. Positions 122 to 159 are LID; the sequence is GRRIHAPSGRVYHIKFNPPVVENKDDVTGEELTVRKDD. ATP-binding positions include arginine 123 and 132-133; that span reads VY. Positions 156 and 167 each coordinate AMP. Arginine 200 contacts ATP.

Belongs to the adenylate kinase family. In terms of assembly, monomer.

The protein localises to the cytoplasm. It carries out the reaction AMP + ATP = 2 ADP. It functions in the pathway purine metabolism; AMP biosynthesis via salvage pathway; AMP from ADP: step 1/1. Its function is as follows. Catalyzes the reversible transfer of the terminal phosphate group between ATP and AMP. Plays an important role in cellular energy homeostasis and in adenine nucleotide metabolism. The protein is Adenylate kinase of Photorhabdus laumondii subsp. laumondii (strain DSM 15139 / CIP 105565 / TT01) (Photorhabdus luminescens subsp. laumondii).